The chain runs to 291 residues: Popeye domain-containing protein 3 (291 aa).

N-linked (GlcNAc...) asparagine glycosylation occurs at Asn4. Helical transmembrane passes span 27-44 (GAIY…FMGG), 48-70 (FGLL…WAWV), and 77-99 (IFSW…AYQV).

It belongs to the popeye family. In terms of tissue distribution, expressed predominantly in skeletal muscle (at protein level). Also detected in heart.

It localises to the membrane. In terms of biological role, may play a role in the maintenance of heart function mediated, at least in part, through cAMP-binding. May play a role in the regulation of KCNK2/TREK-1-mediated current amplitude. This is Popeye domain-containing protein 3 (POPDC3) from Homo sapiens (Human).